The following is a 102-amino-acid chain: Large ribosomal subunit protein bL21 (102 aa).

The protein belongs to the bacterial ribosomal protein bL21 family. In terms of assembly, part of the 50S ribosomal subunit. Contacts protein L20.

Functionally, this protein binds to 23S rRNA in the presence of protein L20. This is Large ribosomal subunit protein bL21 from Marinomonas sp. (strain MWYL1).